The sequence spans 301 residues: tRNA pseudouridine synthase B (301 aa).

D38 functions as the Nucleophile in the catalytic mechanism.

This sequence belongs to the pseudouridine synthase TruB family. Type 1 subfamily.

It catalyses the reaction uridine(55) in tRNA = pseudouridine(55) in tRNA. Responsible for synthesis of pseudouridine from uracil-55 in the psi GC loop of transfer RNAs. This chain is tRNA pseudouridine synthase B, found in Lacticaseibacillus paracasei (strain ATCC 334 / BCRC 17002 / CCUG 31169 / CIP 107868 / KCTC 3260 / NRRL B-441) (Lactobacillus paracasei).